Reading from the N-terminus, the 115-residue chain is Large ribosomal subunit protein bL19 (115 aa).

This sequence belongs to the bacterial ribosomal protein bL19 family.

Its function is as follows. This protein is located at the 30S-50S ribosomal subunit interface and may play a role in the structure and function of the aminoacyl-tRNA binding site. This chain is Large ribosomal subunit protein bL19, found in Tropheryma whipplei (strain TW08/27) (Whipple's bacillus).